Reading from the N-terminus, the 568-residue chain is PTS system lactose-specific EIICB component (568 aa).

The 402-residue stretch at 8 to 409 (IEKGKPFFEK…LVDTVIYYPF (402 aa)) folds into the PTS EIIC type-3 domain. 10 helical membrane-spanning segments follow: residues 30–50 (GFIS…IAYV), 65–85 (MLMT…AGTT), 103–123 (INFI…AADP), 128–148 (GFLS…AAFI), 183–203 (FAFS…VIGV), 222–242 (GYLG…VGIH), 246–266 (IVEP…AHLI), 283–303 (FIVT…FMWL), 339–359 (VFFI…KFFV), and 381–401 (IVLG…LILV). Residues 465 to 568 (ETNVLVLCAG…LAFVEEQFKD (104 aa)) enclose the PTS EIIB type-3 domain. C472 acts as the Phosphocysteine intermediate; for EIIB activity in catalysis. C472 bears the Phosphocysteine; by EIIA mark.

The protein resides in the cell membrane. The catalysed reaction is lactose(out) + N(pros)-phospho-L-histidyl-[protein] = lactose 6-phosphate(in) + L-histidyl-[protein]. Its function is as follows. The phosphoenolpyruvate-dependent sugar phosphotransferase system (sugar PTS), a major carbohydrate active transport system, catalyzes the phosphorylation of incoming sugar substrates concomitantly with their translocation across the cell membrane. The enzyme II LacEF PTS system is involved in lactose transport. The protein is PTS system lactose-specific EIICB component of Streptococcus mutans serotype c (strain ATCC 700610 / UA159).